A 217-amino-acid polypeptide reads, in one-letter code: Probable transaldolase (217 aa).

The Schiff-base intermediate with substrate role is filled by K83.

Belongs to the transaldolase family. Type 3B subfamily.

It is found in the cytoplasm. The catalysed reaction is D-sedoheptulose 7-phosphate + D-glyceraldehyde 3-phosphate = D-erythrose 4-phosphate + beta-D-fructose 6-phosphate. Its pathway is carbohydrate degradation; pentose phosphate pathway; D-glyceraldehyde 3-phosphate and beta-D-fructose 6-phosphate from D-ribose 5-phosphate and D-xylulose 5-phosphate (non-oxidative stage): step 2/3. Functionally, transaldolase is important for the balance of metabolites in the pentose-phosphate pathway. This is Probable transaldolase from Brucella abortus (strain S19).